Consider the following 947-residue polypeptide: Bifunctional glutamine synthetase adenylyltransferase/adenylyl-removing enzyme (947 aa).

An adenylyl removase region spans residues 1–440 (MTPLSSPLSQ…VFNELIGDDE (440 aa)). The interval 450 to 947 (SEPWREVWQD…ASWRKWLVAV (498 aa)) is adenylyl transferase.

Belongs to the GlnE family. The cofactor is Mg(2+).

It carries out the reaction [glutamine synthetase]-O(4)-(5'-adenylyl)-L-tyrosine + phosphate = [glutamine synthetase]-L-tyrosine + ADP. It catalyses the reaction [glutamine synthetase]-L-tyrosine + ATP = [glutamine synthetase]-O(4)-(5'-adenylyl)-L-tyrosine + diphosphate. Functionally, involved in the regulation of glutamine synthetase GlnA, a key enzyme in the process to assimilate ammonia. When cellular nitrogen levels are high, the C-terminal adenylyl transferase (AT) inactivates GlnA by covalent transfer of an adenylyl group from ATP to specific tyrosine residue of GlnA, thus reducing its activity. Conversely, when nitrogen levels are low, the N-terminal adenylyl removase (AR) activates GlnA by removing the adenylyl group by phosphorolysis, increasing its activity. The regulatory region of GlnE binds the signal transduction protein PII (GlnB) which indicates the nitrogen status of the cell. This chain is Bifunctional glutamine synthetase adenylyltransferase/adenylyl-removing enzyme, found in Salmonella paratyphi B (strain ATCC BAA-1250 / SPB7).